A 130-amino-acid chain; its full sequence is Osteocrin (130 aa).

The signal sequence occupies residues 1-25; it reads MLDWRLASTHFILAMIVMLWGSGKA. Residue arginine 129 is modified to Arginine amide.

This sequence belongs to the Osteocrin family. In terms of assembly, interacts with NPR3. As to expression, expressed in skeletal muscle and to a much lesser extent in bone, brown adipose tissue, spleen and testis. Not expressed in neurons.

It localises to the secreted. Hormone that acts as a ligand for natriuretic peptide receptor NPR3/NPR-C and promotes bone growth and physical endurance in muscle. Acts as a regulator of osteoblast differentiation and bone growth by binding to natriuretic peptide receptor NPR3/NPR-C, thereby preventing binding between NPR3/NPR-C and natriuretic peptides, leading to increase cGMP production. Required to enhance physical endurance: induced following physical exercise in muscle and promotes cGMP production, probably by interacting with NPR3/NPR-C. May act as an autocrine and paracrine factor linked to glucose metabolism in skeletal muscle. In Mus musculus (Mouse), this protein is Osteocrin.